The primary structure comprises 137 residues: Small ribosomal subunit protein uS9 (137 aa).

The protein belongs to the universal ribosomal protein uS9 family.

The sequence is that of Small ribosomal subunit protein uS9 from Picosynechococcus sp. (strain ATCC 27264 / PCC 7002 / PR-6) (Agmenellum quadruplicatum).